We begin with the raw amino-acid sequence, 707 residues long: Matrix metalloproteinase-9 (707 aa).

An N-terminal signal peptide occupies residues 1 to 19; sequence MSPRQPLVLALLVLGCCSA. A propeptide spans 20–106 (activation peptide); sequence APRRRQPTLV…PRCGVPDVGK (87 aa). N-linked (GlcNAc...) asparagine glycosylation is present at asparagine 88. The short motif at 97-104 is the Cysteine switch element; the sequence is PRCGVPDV. Cysteine 99 serves as a coordination point for Zn(2+). Residues asparagine 120 and asparagine 127 are each glycosylated (N-linked (GlcNAc...) asparagine). The Ca(2+) site is built by aspartate 131 and aspartate 165. Histidine 175 and aspartate 177 together coordinate Zn(2+). Aspartate 182, glycine 183, aspartate 185, and leucine 187 together coordinate Ca(2+). Histidine 190 contributes to the Zn(2+) binding site. Glycine 197, glutamine 199, and aspartate 201 together coordinate Ca(2+). Histidine 203 provides a ligand contact to Zn(2+). Ca(2+) is bound by residues aspartate 205, aspartate 206, and glutamate 208. 3 consecutive Fibronectin type-II domains span residues 225–273, 283–331, and 342–390; these read ADGA…FCPS, ADGK…FCPT, and SAGE…FCPD. 6 disulfide bridges follow: cysteine 230–cysteine 256, cysteine 244–cysteine 271, cysteine 288–cysteine 314, cysteine 302–cysteine 329, cysteine 347–cysteine 373, and cysteine 361–cysteine 388. Histidine 401 contacts Zn(2+). Glutamate 402 is an active-site residue. Zn(2+) contacts are provided by histidine 405 and histidine 411. The segment at 437 to 508 is disordered; sequence RGIQHLYGPN…ASPSAAPTAS (72 aa). Pro residues predominate over residues 446–467; sequence NPNPQPPATTTPEPQPTAPPTA. Low complexity predominate over residues 481-493; sequence PTTSPTGAPSAGP. Cysteines 516 and 704 form a disulfide. Hemopexin repeat units lie at residues 518–563, 564–608, 610–657, and 658–704; these read VNVF…WPAL, PAKL…GLGP, VPHV…FPGV, and PLNT…ILHC.

Belongs to the peptidase M10A family. In terms of assembly, exists as monomer or homodimer; disulfide-linked. Also exists as heterodimer with LCN2. Macrophages and transformed cell lines produce only the monomeric form. Interacts with ECM1. Requires Zn(2+) as cofactor. Ca(2+) serves as cofactor. N- and O-glycosylated. Osteoclasts.

It localises to the secreted. The protein resides in the extracellular space. The protein localises to the extracellular matrix. It catalyses the reaction Cleavage of gelatin types I and V and collagen types IV and V.. Matrix metalloproteinase that plays an essential role in local proteolysis of the extracellular matrix and in leukocyte migration. Could play a role in bone osteoclastic resorption. Cleaves KiSS1 at a Gly-|-Leu bond. Cleaves NINJ1 to generate the Secreted ninjurin-1 form. Cleaves type IV and type V collagen into large C-terminal three quarter fragments and shorter N-terminal one quarter fragments. Degrades fibronectin but not laminin or Pz-peptide. In Oryctolagus cuniculus (Rabbit), this protein is Matrix metalloproteinase-9.